A 185-amino-acid polypeptide reads, in one-letter code: Tetrahydromethanopterin S-methyltransferase subunit A 2 (185 aa).

Topologically, residues 1-21 (MVDKKVDKKPVPEDWPHIVGD) are cytoplasmic. Residues 22–38 (YVVGDAESPVAVVTLGS) traverse the membrane as a helical segment. The Extracellular segment spans residues 39–185 (HMEDEPVRAG…LNKNKPDENT (147 aa)). A 5-hydroxybenzimidazolylcob(I)amide-binding site is contributed by histidine 88.

It belongs to the MtrA family. The complex is composed of 8 subunits; MtrA, MtrB, MtrC, MtrD, MtrE, MtrF, MtrG and MtrH. 5-hydroxybenzimidazolylcob(I)amide serves as cofactor.

The protein resides in the cell membrane. It carries out the reaction 5-methyl-5,6,7,8-tetrahydromethanopterin + coenzyme M + 2 Na(+)(in) = 5,6,7,8-tetrahydromethanopterin + methyl-coenzyme M + 2 Na(+)(out). Its pathway is one-carbon metabolism; methanogenesis from CO(2); methyl-coenzyme M from 5,10-methylene-5,6,7,8-tetrahydromethanopterin: step 2/2. Its function is as follows. Part of a complex that catalyzes the formation of methyl-coenzyme M and tetrahydromethanopterin from coenzyme M and methyl-tetrahydromethanopterin. This is an energy-conserving, sodium-ion translocating step. The sequence is that of Tetrahydromethanopterin S-methyltransferase subunit A 2 from Methanothermobacter marburgensis (strain ATCC BAA-927 / DSM 2133 / JCM 14651 / NBRC 100331 / OCM 82 / Marburg) (Methanobacterium thermoautotrophicum).